A 61-amino-acid polypeptide reads, in one-letter code: Sperm protamine P1 (61 aa).

The interval 1 to 61 (MARYRHSRSR…RYSRRRRRRY (61 aa)) is disordered.

The protein belongs to the protamine P1 family. Testis.

The protein resides in the nucleus. It localises to the chromosome. Protamines substitute for histones in the chromatin of sperm during the haploid phase of spermatogenesis. They compact sperm DNA into a highly condensed, stable and inactive complex. This Setonix brachyurus (Quokka) protein is Sperm protamine P1 (PRM1).